A 320-amino-acid chain; its full sequence is HPr kinase/phosphorylase (320 aa).

Residues H141 and K162 contribute to the active site. Position 156–163 (156–163) interacts with ATP; it reads GHSGLGKS. Residue S163 coordinates Mg(2+). Residue D180 is the Proton acceptor; for phosphorylation activity. Proton donor; for dephosphorylation activity of the active site. Positions 204–213 are important for the catalytic mechanism of both phosphorylation and dephosphorylation; it reads LEVRGLGILN. Residue E205 participates in Mg(2+) binding. R248 is an active-site residue. The segment at 269–274 is important for the catalytic mechanism of dephosphorylation; it reads PVAVGR.

The protein belongs to the HPrK/P family. As to quaternary structure, homohexamer. Requires Mg(2+) as cofactor.

The catalysed reaction is [HPr protein]-L-serine + ATP = [HPr protein]-O-phospho-L-serine + ADP + H(+). It catalyses the reaction [HPr protein]-O-phospho-L-serine + phosphate + H(+) = [HPr protein]-L-serine + diphosphate. Catalyzes the ATP- as well as the pyrophosphate-dependent phosphorylation of a specific serine residue in HPr, a phosphocarrier protein of the phosphoenolpyruvate-dependent sugar phosphotransferase system (PTS). HprK/P also catalyzes the pyrophosphate-producing, inorganic phosphate-dependent dephosphorylation (phosphorolysis) of seryl-phosphorylated HPr (P-Ser-HPr). The sequence is that of HPr kinase/phosphorylase from Neisseria meningitidis serogroup A / serotype 4A (strain DSM 15465 / Z2491).